The chain runs to 323 residues: o-succinylbenzoate synthase (323 aa).

Residue Lys134 is the Proton donor of the active site. Mg(2+) is bound by residues Asp162, Glu191, and Asp214. Lys236 serves as the catalytic Proton acceptor.

It belongs to the mandelate racemase/muconate lactonizing enzyme family. MenC type 1 subfamily. The cofactor is a divalent metal cation.

It catalyses the reaction (1R,6R)-6-hydroxy-2-succinyl-cyclohexa-2,4-diene-1-carboxylate = 2-succinylbenzoate + H2O. It functions in the pathway quinol/quinone metabolism; 1,4-dihydroxy-2-naphthoate biosynthesis; 1,4-dihydroxy-2-naphthoate from chorismate: step 4/7. Its pathway is quinol/quinone metabolism; menaquinone biosynthesis. Converts 2-succinyl-6-hydroxy-2,4-cyclohexadiene-1-carboxylate (SHCHC) to 2-succinylbenzoate (OSB). The polypeptide is o-succinylbenzoate synthase (Proteus mirabilis (strain HI4320)).